The chain runs to 355 residues: tRNA-specific 2-thiouridylase MnmA (355 aa).

ATP-binding positions include 6–13 (AMSGGVDS) and Met32. Cys93 functions as the Nucleophile in the catalytic mechanism. A disulfide bridge links Cys93 with Cys191. Residue Gly117 coordinates ATP. The segment at 140 to 142 (KDQ) is interaction with tRNA. Cys191 (cysteine persulfide intermediate) is an active-site residue. The segment at 296–297 (RY) is interaction with tRNA.

The protein belongs to the MnmA/TRMU family.

The protein localises to the cytoplasm. It catalyses the reaction S-sulfanyl-L-cysteinyl-[protein] + uridine(34) in tRNA + AH2 + ATP = 2-thiouridine(34) in tRNA + L-cysteinyl-[protein] + A + AMP + diphosphate + H(+). Catalyzes the 2-thiolation of uridine at the wobble position (U34) of tRNA, leading to the formation of s(2)U34. This chain is tRNA-specific 2-thiouridylase MnmA, found in Pelobacter propionicus (strain DSM 2379 / NBRC 103807 / OttBd1).